Reading from the N-terminus, the 939-residue chain is Isoleucine--tRNA ligase (939 aa).

A 'HIGH' region motif is present at residues 57-67; it reads PYANGEIHIGH. Glutamate 563 is an L-isoleucyl-5'-AMP binding site. A 'KMSKS' region motif is present at residues 604 to 608; it reads KMSKS. Lysine 607 lines the ATP pocket. 4 residues coordinate Zn(2+): cysteine 902, cysteine 905, cysteine 922, and cysteine 925.

This sequence belongs to the class-I aminoacyl-tRNA synthetase family. IleS type 1 subfamily. Monomer. It depends on Zn(2+) as a cofactor.

Its subcellular location is the cytoplasm. It carries out the reaction tRNA(Ile) + L-isoleucine + ATP = L-isoleucyl-tRNA(Ile) + AMP + diphosphate. Catalyzes the attachment of isoleucine to tRNA(Ile). As IleRS can inadvertently accommodate and process structurally similar amino acids such as valine, to avoid such errors it has two additional distinct tRNA(Ile)-dependent editing activities. One activity is designated as 'pretransfer' editing and involves the hydrolysis of activated Val-AMP. The other activity is designated 'posttransfer' editing and involves deacylation of mischarged Val-tRNA(Ile). This is Isoleucine--tRNA ligase from Methylococcus capsulatus (strain ATCC 33009 / NCIMB 11132 / Bath).